A 71-amino-acid polypeptide reads, in one-letter code: Exodeoxyribonuclease 7 small subunit (71 aa).

Belongs to the XseB family. As to quaternary structure, heterooligomer composed of large and small subunits.

The protein localises to the cytoplasm. The catalysed reaction is Exonucleolytic cleavage in either 5'- to 3'- or 3'- to 5'-direction to yield nucleoside 5'-phosphates.. In terms of biological role, bidirectionally degrades single-stranded DNA into large acid-insoluble oligonucleotides, which are then degraded further into small acid-soluble oligonucleotides. The polypeptide is Exodeoxyribonuclease 7 small subunit (Streptococcus thermophilus (strain ATCC BAA-250 / LMG 18311)).